Reading from the N-terminus, the 468-residue chain is Ammonium transporter Amt2 (468 aa).

12 helical membrane-spanning segments follow: residues 1 to 21 (MVGR…TAGA), 39 to 59 (FVWA…FAML), 77 to 97 (LMDF…LMMG), 123 to 143 (LWFF…GSIA), 156 to 176 (AVVS…GGWL), 194 to 214 (FAGS…AVML), 236 to 256 (LAFA…FNAG), 268 to 288 (IIAS…MAIT), 297 to 317 (VGMT…PCAW), 321 to 341 (WSSV…YWWL), 350 to 370 (VGAI…LGIF), and 400 to 420 (LISA…LFWI).

The protein belongs to the ammonia transporter channel (TC 1.A.11.2) family. As to quaternary structure, homotrimer.

The protein resides in the cell membrane. In terms of biological role, involved in the uptake of ammonium/ammonia (NH(4)(+)/NH(3)). Transport is electrogenic. The protein is Ammonium transporter Amt2 of Archaeoglobus fulgidus (strain ATCC 49558 / DSM 4304 / JCM 9628 / NBRC 100126 / VC-16).